The primary structure comprises 545 residues: Glucose-6-phosphate isomerase (545 aa).

The Proton donor role is filled by Glu-351. Active-site residues include His-382 and Lys-510.

The protein belongs to the GPI family.

It is found in the cytoplasm. It carries out the reaction alpha-D-glucose 6-phosphate = beta-D-fructose 6-phosphate. Its pathway is carbohydrate biosynthesis; gluconeogenesis. It functions in the pathway carbohydrate degradation; glycolysis; D-glyceraldehyde 3-phosphate and glycerone phosphate from D-glucose: step 2/4. Its function is as follows. Catalyzes the reversible isomerization of glucose-6-phosphate to fructose-6-phosphate. This Shewanella loihica (strain ATCC BAA-1088 / PV-4) protein is Glucose-6-phosphate isomerase.